The following is a 152-amino-acid chain: Ribosome maturation factor RimP (152 aa).

This sequence belongs to the RimP family.

The protein localises to the cytoplasm. Its function is as follows. Required for maturation of 30S ribosomal subunits. This Desulfitobacterium hafniense (strain Y51) protein is Ribosome maturation factor RimP.